We begin with the raw amino-acid sequence, 263 residues long: UPF0328 protein ECU08_2060 (263 aa).

This sequence belongs to the UPF0328 family.

This Encephalitozoon cuniculi (strain GB-M1) (Microsporidian parasite) protein is UPF0328 protein ECU08_2060.